Consider the following 469-residue polypeptide: Probable Xaa-Pro aminopeptidase PEPP (469 aa).

Residues Asp-264, Asp-275, Glu-398, and Glu-438 each coordinate Mn(2+).

Belongs to the peptidase M24B family. Requires Mn(2+) as cofactor.

It carries out the reaction Release of any N-terminal amino acid, including proline, that is linked to proline, even from a dipeptide or tripeptide.. Functionally, catalyzes the removal of a penultimate prolyl residue from the N-termini of peptides. The protein is Probable Xaa-Pro aminopeptidase PEPP (PEPP) of Ajellomyces capsulatus (strain H143) (Darling's disease fungus).